The chain runs to 478 residues: Catalase (478 aa).

Residues 1–23 (MTNQLTTNEGQPWADNQHSQTAG) form a disordered region. Catalysis depends on residues histidine 53 and asparagine 126. Tyrosine 336 contacts heme.

The protein belongs to the catalase family. Requires heme as cofactor.

The protein localises to the cytoplasm. The enzyme catalyses 2 H2O2 = O2 + 2 H2O. Its function is as follows. Decomposes hydrogen peroxide into water and oxygen; serves to protect cells from the toxic effects of hydrogen peroxide. This chain is Catalase (katA), found in Latilactobacillus sakei (Lactobacillus sakei).